The following is a 629-amino-acid chain: Rho GTPase-activating protein conundrum (629 aa).

A required for interaction with Moe region spans residues 185–294; it reads PPKSGTYADI…CRDSSSLDSC (110 aa). The interval 237–261 is disordered; sequence SIGRSKESRSENDARSQKKKSSEVL. Over residues 240 to 258 the composition is skewed to basic and acidic residues; the sequence is RSKESRSENDARSQKKKSS. In terms of domain architecture, Rho-GAP spans 359-565; sequence VSINALIRRD…ILILRGEKLF (207 aa).

Interacts with Moe (via FERM domain).

It is found in the cytoplasm. The protein localises to the cell membrane. The protein resides in the cell cortex. Its subcellular location is the cell junction. Functionally, GTPase-activating protein (GAP) for Rho1; functions with the ERM protein Moe to regulate Rho1 and control proliferation in the developing epithelium. Recruited by Moe to the cell cortex where it negatively regulates Rho1 activity. Can also promote cell proliferation independently of its GAP activity, perhaps by acting with Arf6 to positively regulate Rac1. The polypeptide is Rho GTPase-activating protein conundrum (Drosophila melanogaster (Fruit fly)).